The following is a 257-amino-acid chain: Non-homologous end joining protein Ku (257 aa).

The Ku domain maps to 9-184 (TFGMVAIPIG…YTKPEVNEQE (176 aa)).

Belongs to the prokaryotic Ku family. As to quaternary structure, homodimer. Interacts with LigD.

Its function is as follows. With LigD forms a non-homologous end joining (NHEJ) DNA repair enzyme, which repairs dsDNA breaks with reduced fidelity. Binds linear dsDNA with 5'- and 3'- overhangs but not closed circular dsDNA nor ssDNA. Recruits and stimulates the ligase activity of LigD. The polypeptide is Non-homologous end joining protein Ku (Lachnoclostridium phytofermentans (strain ATCC 700394 / DSM 18823 / ISDg) (Clostridium phytofermentans)).